Consider the following 396-residue polypeptide: MAKSKFERTKPHVNVGTIGHVDHGKTTLTAAITTVLSSKFGGEAKAYDQIDAAPEEKARGITINTAHVEYETANRHYAHVDCPGHADYVKNMITGAAQMDGAILVVSAADGPMPQTREHILLARQVGVPYIIVFLNKCDMVDDAELLELVEMEVRELLSKYDFPGDDTPIIKGSAKLALEGDKGELGEGAILKLAEALDTYIPTPERAVDGAFLMPVEDVFSISGRGTVVTGRVERGIIKVGEEIEIVGLKPTLKTTCTGVEMFRKLLDQGQAGDNVGILLRGTKREEVERGQVLCKPGSIKPHTHFTAEVYVLSKDEGGRHTPFFNNYRPQFYFRTTDVTGAIELPKDKEMVMPGDNVSITVKLIAPIAMEEGLRFAIREGGRTVGAGVVAKIIE.

Positions 10–206 constitute a tr-type G domain; the sequence is KPHVNVGTIG…ALDTYIPTPE (197 aa). Residues 19–26 form a G1 region; that stretch reads GHVDHGKT. Position 19–26 (19–26) interacts with GTP; it reads GHVDHGKT. Mg(2+) is bound at residue Thr-26. Residues 60 to 64 are G2; that stretch reads GITIN. The segment at 81–84 is G3; sequence DCPG. GTP is bound by residues 81–85 and 136–139; these read DCPGH and NKCD. A G4 region spans residues 136–139; the sequence is NKCD. A G5 region spans residues 174–176; that stretch reads SAK.

The protein belongs to the TRAFAC class translation factor GTPase superfamily. Classic translation factor GTPase family. EF-Tu/EF-1A subfamily. In terms of assembly, monomer.

It is found in the cytoplasm. It catalyses the reaction GTP + H2O = GDP + phosphate + H(+). In terms of biological role, GTP hydrolase that promotes the GTP-dependent binding of aminoacyl-tRNA to the A-site of ribosomes during protein biosynthesis. The polypeptide is Elongation factor Tu (Thiomonas delicata (Thiomonas cuprina)).